The sequence spans 173 residues: MAIILGVDPGSRITGYGVIQCQGRQQLYLGSGCIRTSGEDLPLRLKQIFDGISEIIRQYQPDEFAIERVFLAKNADSALKLGQARGAAIVAATVANLPVAEYSATQIKNAVVGTGRAKKEQVQHMIQQLLKLPAAPQADAADALGVAVCHYHTNQSLVALSGRATTRTYGRYR.

Residues aspartate 8, glutamate 67, and aspartate 139 contribute to the active site. Residues aspartate 8, glutamate 67, and aspartate 139 each contribute to the Mg(2+) site.

Belongs to the RuvC family. Homodimer which binds Holliday junction (HJ) DNA. The HJ becomes 2-fold symmetrical on binding to RuvC with unstacked arms; it has a different conformation from HJ DNA in complex with RuvA. In the full resolvosome a probable DNA-RuvA(4)-RuvB(12)-RuvC(2) complex forms which resolves the HJ. The cofactor is Mg(2+).

It is found in the cytoplasm. It carries out the reaction Endonucleolytic cleavage at a junction such as a reciprocal single-stranded crossover between two homologous DNA duplexes (Holliday junction).. Functionally, the RuvA-RuvB-RuvC complex processes Holliday junction (HJ) DNA during genetic recombination and DNA repair. Endonuclease that resolves HJ intermediates. Cleaves cruciform DNA by making single-stranded nicks across the HJ at symmetrical positions within the homologous arms, yielding a 5'-phosphate and a 3'-hydroxyl group; requires a central core of homology in the junction. The consensus cleavage sequence is 5'-(A/T)TT(C/G)-3'. Cleavage occurs on the 3'-side of the TT dinucleotide at the point of strand exchange. HJ branch migration catalyzed by RuvA-RuvB allows RuvC to scan DNA until it finds its consensus sequence, where it cleaves and resolves the cruciform DNA. The polypeptide is Crossover junction endodeoxyribonuclease RuvC (Shewanella sp. (strain MR-4)).